Reading from the N-terminus, the 505-residue chain is MTTFTKLSDQDAPSISIHPARRLSKINPNIYAGFTEHMGRCIYGGIYDPGNSLSDENGFRKDVLEALKELNIPVVRYPGGNFMATYHWIDGVGPKEKRPARPELAWLGTETNQFGTDEFLKWCEVLGTEPYFCLNFGTGTLDEALAWVEYCNGTKDTYYANLRRKNGREEPYNVKYWALGNETWGPWQVEQMTKEAYAHKAYQWAKALKLLDPSLILILCGQDGTASWDYYTLKQCLLPAHSPLSTSTVPLIDMHSIHLYTSSPSHLPNVTAPLAAERAIEITSSLIDLARIENGVPPDQHRPTICFDEWNVWDPIRAEGSKGAEESYTLSDALAVAVFLNVFVRKSKDLGMACIAQSVNVISPLMTSKDGITKQTTYWPLYLFSKYMRGWTISVHLSCASYEGETSPKWVRGVKDTPWLDVSATLGEDGYVNVAVVNIHEEKDIRSSIDGPSGTVSVFTVTGERVQACNMNGKEEVAVTESTWEAREQFVFPKHSLTLLRWKLA.

Residues asparagine 152, asparagine 181, and asparagine 269 are each glycosylated (N-linked (GlcNAc...) asparagine).

It belongs to the glycosyl hydrolase 51 family.

It is found in the secreted. It carries out the reaction Hydrolysis of terminal non-reducing alpha-L-arabinofuranoside residues in alpha-L-arabinosides.. It functions in the pathway glycan metabolism; L-arabinan degradation. Functionally, alpha-L-arabinofuranosidase involved in the degradation of arabinoxylan, a major component of plant hemicellulose. Acts only on small linear 1,5-alpha-linked L-arabinofuranosyl oligosaccharides. The protein is Probable alpha-L-arabinofuranosidase C (abfC) of Aspergillus niger (strain ATCC MYA-4892 / CBS 513.88 / FGSC A1513).